A 117-amino-acid polypeptide reads, in one-letter code: Immunoglobulin heavy variable 1-45 (117 aa).

An N-terminal signal peptide occupies residues Met-1–Ser-19. A framework-1 region spans residues Gln-20–Ser-44. The 98-residue stretch at Gln-20 to Arg-117 folds into the Ig-like domain. Residues Cys-41 and Cys-115 are joined by a disulfide bond. The complementarity-determining-1 stretch occupies residues Gly-45–Tyr-52. The interval Leu-53 to Trp-69 is framework-2. The complementarity-determining-2 stretch occupies residues Ile-70–Thr-77. The interval Asn-78–Cys-115 is framework-3. Positions Ala-116–Arg-117 are complementarity-determining-3.

Immunoglobulins are composed of two identical heavy chains and two identical light chains; disulfide-linked.

The protein localises to the secreted. Its subcellular location is the cell membrane. Its function is as follows. V region of the variable domain of immunoglobulin heavy chains that participates in the antigen recognition. Immunoglobulins, also known as antibodies, are membrane-bound or secreted glycoproteins produced by B lymphocytes. In the recognition phase of humoral immunity, the membrane-bound immunoglobulins serve as receptors which, upon binding of a specific antigen, trigger the clonal expansion and differentiation of B lymphocytes into immunoglobulins-secreting plasma cells. Secreted immunoglobulins mediate the effector phase of humoral immunity, which results in the elimination of bound antigens. The antigen binding site is formed by the variable domain of one heavy chain, together with that of its associated light chain. Thus, each immunoglobulin has two antigen binding sites with remarkable affinity for a particular antigen. The variable domains are assembled by a process called V-(D)-J rearrangement and can then be subjected to somatic hypermutations which, after exposure to antigen and selection, allow affinity maturation for a particular antigen. The sequence is that of Immunoglobulin heavy variable 1-45 from Homo sapiens (Human).